The primary structure comprises 328 residues: Adenosine receptor A1 (328 aa).

At 1-10 (MPPSISAFQA) the chain is on the extracellular side. Residues 11-33 (AYIGIEVLIALVSVPGNVLVIWA) traverse the membrane as a helical segment. At 34–46 (VKVNQALRDATFC) the chain is on the cytoplasmic side. The helical transmembrane segment at 47 to 69 (FIVSLAVADVAVGALVIPLAILI) threads the bilayer. The Extracellular segment spans residues 70-80 (NIGPETYFHTC). Cys-80 and Cys-169 form a disulfide bridge. The chain crosses the membrane as a helical span at residues 81–102 (LMVACPVLILTQSSILALLAIA). Topologically, residues 103-123 (VDRYLRVKIPLRYKAVVTPRR) are cytoplasmic. The helical transmembrane segment at 124–146 (AAVAIAGCWILSLVVGLTPMFGW) threads the bilayer. Over 147–176 (NNLREVQRAWAANGSVGEPVIKCEFEKVIS) the chain is Extracellular. N-linked (GlcNAc...) asparagine glycosylation occurs at Asn-159. A helical membrane pass occupies residues 177–201 (MEYMVYFNFFVWVLPPLLLMVLIYL). The Cytoplasmic portion of the chain corresponds to 202 to 235 (EVFYLIRRQLSKKASASSGDPHKYYGKELKIAKS). The chain crosses the membrane as a helical span at residues 236–259 (LALILFLFALSWLPLHILNCVTLF). Residues 260 to 267 (CPSCQKPS) are Extracellular-facing. Residues 268–292 (ILVYTAIFLTHGNSAMNPIVYAFRI) form a helical membrane-spanning segment. Over 293 to 328 (HKFRVTFLKIWNDHFRCRPAPAGDGDEDLPEEKPND) the chain is Cytoplasmic. Cys-309 carries the S-palmitoyl cysteine lipid modification.

The protein belongs to the G-protein coupled receptor 1 family.

The protein resides in the cell membrane. Functionally, receptor for adenosine. The activity of this receptor is mediated by G proteins which inhibit adenylyl cyclase. This chain is Adenosine receptor A1 (ADORA1), found in Oryctolagus cuniculus (Rabbit).